The primary structure comprises 229 residues: C-&gt;U-editing enzyme APOBEC-1 (229 aa).

Positions 10–134 constitute a CMP/dCMP-type deaminase domain; it reads VDPTLRRRIE…QRNRQGLRDL (125 aa). His61 contributes to the Zn(2+) binding site. Glu63 acts as the Proton donor in catalysis. Zn(2+) contacts are provided by Cys93 and Cys96.

It belongs to the cytidine and deoxycytidylate deaminase family. As to quaternary structure, homodimer. Interacts with A1CF; form an mRNA editing complex. Interacts with RBM47; form an mRNA editing complex. Found in a complex with CELF2/CUGBP2 and A1CF. Interacts with HNRPAB. Interacts with SYNCRIP. Requires Zn(2+) as cofactor. In terms of tissue distribution, expressed in the spleen. Expressed at lower level in the kidney, testis, lung, brain and liver.

Its subcellular location is the cytoplasm. It localises to the nucleus. The catalysed reaction is a cytidine in mRNA + H2O + H(+) = a uridine in mRNA + NH4(+). The enzyme catalyses cytidine(6666) in apoB mRNA + H2O + H(+) = uridine(6666) in apoB mRNA + NH4(+). Functionally, cytidine deaminase catalyzing the cytidine to uridine postranscriptional editing of a variety of mRNAs. Form complexes with cofactors that confer differential editing activity and selectivity. Responsible for the postranscriptional editing of a CAA codon for Gln to a UAA codon for stop in the apolipoprotein B mRNA. Also involved in CGA (Arg) to UGA (Stop) editing in the NF1 mRNA. May also play a role in the epigenetic regulation of gene expression by participating in DNA demethylation. This chain is C-&gt;U-editing enzyme APOBEC-1, found in Mus musculus (Mouse).